The chain runs to 649 residues: Acid beta-fructofuranosidase (649 aa).

Over 1–22 (MEHHKPLLPTSSHAAPTSSTRK) the chain is Cytoplasmic. Positions 1–101 (MEHHKPLLPT…NLLFAGEGGA (101 aa)) are cleaved as a propeptide — removed in mature form. A helical; Signal-anchor for type II membrane protein transmembrane segment spans residues 23 to 43 (DLLFVLCGLLFLSSLVAYGGY). Residues 44–649 (RASGVPHAHL…PFPFNPDQKS (606 aa)) lie on the Lumenal side of the membrane. Residues 52–75 (HLSSPTSNHQQDHQSPTSLPSSKW) are disordered. Over residues 54 to 72 (SSPTSNHQQDHQSPTSLPS) the composition is skewed to polar residues. Substrate contacts are provided by residues 127-130 (WMND), Q146, W154, and 189-190 (WT). The active site involves D130. N-linked (GlcNAc...) (complex) asparagine glycosylation occurs at N210. Residue 253–254 (RD) participates in substrate binding. A glycan (N-linked (GlcNAc...) (complex) asparagine) is linked at N275. Positions 308 and 341 each coordinate substrate. C498 and C546 are disulfide-bonded. The N-linked (GlcNAc...) (high mannose) asparagine glycan is linked to N618.

This sequence belongs to the glycosyl hydrolase 32 family. In terms of assembly, present in two forms, a 70 kDa monomer and a heterodimer of the 30 kDa and 38 kDa subunits. The ratio of the levels of the two forms within cells appears to be regulated developmentally.

The protein resides in the membrane. Its subcellular location is the vacuole lumen. The enzyme catalyses Hydrolysis of terminal non-reducing beta-D-fructofuranoside residues in beta-D-fructofuranosides.. It participates in glycan biosynthesis; sucrose metabolism. Functionally, possible role in the continued mobilization of sucrose to sink organs. This chain is Acid beta-fructofuranosidase (INVA), found in Vigna radiata var. radiata (Mung bean).